Reading from the N-terminus, the 198-residue chain is MASGNAHIGKPAPDFTATAVVDGAFKEVKLSDYRGKYVVLFFYPLDFTFVCPTEIIAFSNHAEDFRKLGCEVLGVSVDSQFTHLAWINTPRKEGGLGPLNIPLLADVTRSLSENYGVLKTDEGIAYRGLFIIDAKGILRQITVNDLPVGRSVDEALRLVQAFQYTDEHGEVCPAGWKPGSDTIKPNVDDSKEYFSKHN.

At Ala-2 the chain carries N-acetylalanine. A Thioredoxin domain is found at 6–164 (AHIGKPAPDF…ALRLVQAFQY (159 aa)). Catalysis depends on Cys-51, which acts as the Cysteine sulfenic acid (-SOH) intermediate. Phosphoserine is present on Ser-112. A Phosphothreonine modification is found at Thr-182. Lys-196 is subject to N6-acetyllysine.

Belongs to the peroxiredoxin family. AhpC/Prx1 subfamily. Homodimer; disulfide-linked, upon oxidation. 5 homodimers assemble to form a ring-like decamer. Interacts with TIPIN. Post-translationally, the enzyme can be inactivated by further oxidation of the cysteine sulfenic acid (C(P)-SOH) to sulphinic acid (C(P)-SO2H) instead of its condensation to a disulfide bond. It can be reactivated by forming a transient disulfide bond with sulfiredoxin SRXN1, which reduces the cysteine sulfinic acid in an ATP- and Mg-dependent manner. In terms of processing, acetylation increases resistance to transition to high molecular-mass complexes. Deacetylated by HDAC6 which decreases reducing activity.

The protein localises to the cytoplasm. It carries out the reaction a hydroperoxide + [thioredoxin]-dithiol = an alcohol + [thioredoxin]-disulfide + H2O. In terms of biological role, thiol-specific peroxidase that catalyzes the reduction of hydrogen peroxide and organic hydroperoxides to water and alcohols, respectively. Plays a role in cell protection against oxidative stress by detoxifying peroxides and as sensor of hydrogen peroxide-mediated signaling events. Might participate in the signaling cascades of growth factors and tumor necrosis factor-alpha by regulating the intracellular concentrations of H(2)O(2). This chain is Peroxiredoxin-2 (PRDX2), found in Cricetulus griseus (Chinese hamster).